Consider the following 562-residue polypeptide: Furostanol glycoside 26-O-beta-glucosidase (562 aa).

Residues 1–44 (MAAQLGLPLVSCHRGASQAASSSAHLVPGASAIMQAGNRRQKMR) constitute a chloroplast transit peptide. A beta-D-glucoside is bound by residues Gln110, His214, and 259-260 (NE). Glu260 (proton donor) is an active-site residue. Cys279 and Cys285 are joined by a disulfide. A beta-D-glucoside contacts are provided by residues Tyr401, Glu472, Trp518, 525-526 (EW), and Phe534. Glu472 functions as the Nucleophile in the catalytic mechanism.

The protein belongs to the glycosyl hydrolase 1 family. As to quaternary structure, heterodimer. The N-terminus of the larger subunit is blocked and the smaller subunit might be derived from the larger one.

The protein resides in the plastid. The protein localises to the chloroplast. It catalyses the reaction protodioscin + H2O = 26-deglucoprotodioscin + D-glucose. Partially inhibited by glucono-1,5-lactone, conduritol beta-epoxide and diosgenin, but not by beta-sitosterol or cholesterol. In terms of biological role, beta-glucosidase involved in saponin metabolism. Highly specific for the cleavage of C-26-bound glucose moiety of furostanol glycosides such as protogracillin and protodioscin. No activity with nuatigenin glycoside. Convers furostanol glycosides to spirostanol glycosides. The chain is Furostanol glycoside 26-O-beta-glucosidase from Hellenia speciosa (Crepe ginger).